Consider the following 392-residue polypeptide: Galactokinase (392 aa).

4 residues coordinate alpha-D-galactose: arginine 37, glutamate 43, histidine 44, and aspartate 46. ATP-binding residues include glycine 136, glycine 138, serine 140, and serine 141. Residue aspartate 186 coordinates alpha-D-galactose. The active-site Proton acceptor is aspartate 186. Serine 230 carries the post-translational modification Phosphoserine. Tyrosine 236 provides a ligand contact to alpha-D-galactose.

The protein belongs to the GHMP kinase family. GalK subfamily. Homodimer.

The enzyme catalyses alpha-D-galactose + ATP = alpha-D-galactose 1-phosphate + ADP + H(+). Its pathway is carbohydrate metabolism; galactose metabolism. In terms of biological role, catalyzes the transfer of a phosphate from ATP to alpha-D-galactose and participates in the first committed step in the catabolism of galactose. The sequence is that of Galactokinase (GALK1) from Canis lupus familiaris (Dog).